The following is a 645-amino-acid chain: Protein FAM47B (645 aa).

Basic and acidic residues-rich tracts occupy residues 1 to 11 (MGDRRPQDRPR), 238 to 251 (EPPE…RVDP), and 288 to 299 (PETRVSHLHPEP). 2 disordered regions span residues 1–23 (MGDR…WYCD) and 168–321 (AREK…SLCP).

It belongs to the FAM47 family.

The protein is Protein FAM47B (FAM47B) of Homo sapiens (Human).